A 96-amino-acid chain; its full sequence is ATP-dependent Clp protease adapter protein ClpS (96 aa).

The protein belongs to the ClpS family. Binds to the N-terminal domain of the chaperone ClpA.

Its function is as follows. Involved in the modulation of the specificity of the ClpAP-mediated ATP-dependent protein degradation. In Campylobacter jejuni subsp. jejuni serotype O:2 (strain ATCC 700819 / NCTC 11168), this protein is ATP-dependent Clp protease adapter protein ClpS.